The chain runs to 38 residues: Potassium channel toxin alpha-KTx 3.17 (38 aa).

3 disulfides stabilise this stretch: Cys8–Cys28, Cys14–Cys33, and Cys18–Cys35.

It belongs to the short scorpion toxin superfamily. Potassium channel inhibitor family. Alpha-KTx 03 subfamily. Expressed by the venom gland.

It is found in the secreted. Its function is as follows. Completely inhibits the (125)I-kaliotoxin binding on rat brain synaptosomes with high-affinity (IC(50)=0.1 nM). Is a potent Kv1.3/KCNA3 ligand. The protein is Potassium channel toxin alpha-KTx 3.17 of Buthus paris (Scorpion).